We begin with the raw amino-acid sequence, 453 residues long: MHKVELPRAQKLAERAFANLERFLHIEAVSGIVLLIAAVAALIWANSPAADSYEALWHTPLTFGVGSHVYSQSLHFWINDGLMTIFFLVVGMEIRREIHEGALSSLRQATLPMAAAVGGVAVPALLYLSFGHASADQQGWAVPTATDIAFAVGVLALLGKSIPSNVRVFLLALAIIDDIIAVLIIAFFYSGGLDYTGFGVALIGLLMVIGLQKIGVGSAYAYVLPGAIVWLGILLTGAHPTLAGVVLGLMTPVTAMPMRERPLDAITRFTGELLGRAKAPEQDASDLMDPLKRLRLAQRELLPPVVRMQGTLHPWVAFGIMPVFALANAGVSLSGVDLSVEGPQWVMIAVAVALVAGKPLGIVSVSWLMVRLGWCVLPAEINWRSIVLVGLLAGIGFTMSIFIANLAFVDPGSLGAAKLGVLSASLIAAVLGLTWGVWSLRSTASATKAGSPT.

The next 12 helical transmembrane spans lie at 23–43 (FLHIEAVSGIVLLIAAVAALI), 74–94 (LHFWINDGLMTIFFLVVGMEI), 111–131 (LPMAAAVGGVAVPALLYLSFG), 139–159 (GWAVPTATDIAFAVGVLALLG), 168–188 (VFLLALAIIDDIIAVLIIAFF), 191–211 (GGLDYTGFGVALIGLLMVIGL), 214–234 (IGVGSAYAYVLPGAIVWLGIL), 235–255 (LTGAHPTLAGVVLGLMTPVTA), 316–336 (VAFGIMPVFALANAGVSLSGV), 345–365 (WVMIAVAVALVAGKPLGIVSV), 386–406 (IVLVGLLAGIGFTMSIFIANL), and 419–439 (LGVLSASLIAAVLGLTWGVWS).

Belongs to the NhaA Na(+)/H(+) (TC 2.A.33) antiporter family.

It is found in the cell inner membrane. It carries out the reaction Na(+)(in) + 2 H(+)(out) = Na(+)(out) + 2 H(+)(in). Na(+)/H(+) antiporter that extrudes sodium in exchange for external protons. The protein is Na(+)/H(+) antiporter NhaA 2 of Pseudomonas putida (strain ATCC 700007 / DSM 6899 / JCM 31910 / BCRC 17059 / LMG 24140 / F1).